A 397-amino-acid polypeptide reads, in one-letter code: Protein Rep52 (397 aa).

The 156-residue stretch at 84-239 folds into the SF3 helicase domain; sequence DPQYAASVFL…LDHDFGKVTK (156 aa). An ATP-binding site is contributed by 110–117; that stretch reads GPATTGKT. Positions 265–296 are disordered; sequence GGAKKRPAPSDADISEPKRVRESVAQPSTSDA.

In terms of assembly, homooligomer. Interacts with host PRKX.

The protein localises to the host nucleus. Functionally, plays a critical role during packaging of viral DNA into empty capsids, where they are thought to be part of the packaging motor complex. The single stranded genomic DNA is packaged in a 3' to 5' direction and requires the association between viral DNA and Rep40. Regulates host PKA activity by interacting with host PRKX as a mechanism to interfere with helper virus propagation and to promote its own replication. The polypeptide is Protein Rep52 (Rep52) (Mammalia (AAV-2)).